Consider the following 103-residue polypeptide: Small ribosomal subunit protein uS10 (103 aa).

This sequence belongs to the universal ribosomal protein uS10 family. As to quaternary structure, part of the 30S ribosomal subunit.

Involved in the binding of tRNA to the ribosomes. In Pectobacterium atrosepticum (strain SCRI 1043 / ATCC BAA-672) (Erwinia carotovora subsp. atroseptica), this protein is Small ribosomal subunit protein uS10.